The chain runs to 307 residues: tRNA dimethylallyltransferase (307 aa).

10 to 17 contacts ATP; that stretch reads GPTAVGKT. Substrate is bound at residue 12 to 17; it reads TAVGKT. Positions 35–38 are interaction with substrate tRNA; the sequence is DSMQ.

The protein belongs to the IPP transferase family. Monomer. The cofactor is Mg(2+).

The catalysed reaction is adenosine(37) in tRNA + dimethylallyl diphosphate = N(6)-dimethylallyladenosine(37) in tRNA + diphosphate. Catalyzes the transfer of a dimethylallyl group onto the adenine at position 37 in tRNAs that read codons beginning with uridine, leading to the formation of N6-(dimethylallyl)adenosine (i(6)A). The polypeptide is tRNA dimethylallyltransferase (Ligilactobacillus salivarius (strain UCC118) (Lactobacillus salivarius)).